A 188-amino-acid polypeptide reads, in one-letter code: Protein Cripto (188 aa).

The N-terminal stretch at 1-30 is a signal peptide; the sequence is MDCRKMARFSYSVIWIMAISKVFELGLVAG. Residues 78–107 form the EGF-like domain; that stretch reads LNRTCCLNGGTCMLGSFCACPPSFYGRNCE. Residue Asn-79 is glycosylated (N-linked (GlcNAc...) asparagine). 6 cysteine pairs are disulfide-bonded: Cys-82–Cys-89, Cys-83–Cys-95, Cys-97–Cys-106, Cys-115–Cys-133, Cys-128–Cys-149, and Cys-131–Cys-140. Residue Asp-150 is the site of GPI-anchor amidated aspartate attachment. The propeptide at 151 to 188 is removed in mature form; it reads GLVMDEHLVASRTPELPPSARTTTFMLVGICLSIQSYY.

It belongs to the EGF-CFC (Cripto-1/FRL1/Cryptic) family. As to quaternary structure, interacts with the activin type-1 receptor ACVR1B. In terms of processing, the GPI-anchor is attached to the protein in the endoplasmic reticulum and serves to target the protein to the cell surface. There, it is processed by GPI processing phospholipase A2 (TMEM8A), removing an acyl-chain at the sn-2 position of GPI and releasing CRIPTO as a lysophosphatidylinositol-bearing form, which is further cleaved by phospholipase D (GPLD1) into a soluble form. In terms of tissue distribution, preferentially expressed in gastric and colorectal carcinomas than in their normal counterparts. Expressed in breast and lung.

The protein resides in the cell membrane. It is found in the secreted. In terms of biological role, GPI-anchored cell membrane protein involved in Nodal signaling. Cell-associated CRIPTO acts as a Nodal coreceptor in cis. Shedding of CRIPTO by TMEM8A modulates Nodal signaling by allowing soluble CRIPTO to act as a Nodal coreceptor on other cells. Could play a role in the determination of the epiblastic cells that subsequently give rise to the mesoderm. This is Protein Cripto from Homo sapiens (Human).